The chain runs to 233 residues: Small ribosomal subunit protein uS2c (233 aa).

It belongs to the universal ribosomal protein uS2 family.

The protein resides in the plastid. It localises to the apicoplast. This Toxoplasma gondii protein is Small ribosomal subunit protein uS2c.